We begin with the raw amino-acid sequence, 756 residues long: Receptor-like protein 3 (756 aa).

The first 50 residues, 1–50 (MTNEGRFKAKGFVRTSSTTRPIQALSFHMIGILLQCVLFISVLSIAVSEA), serve as a signal peptide directing secretion. Residues 51-88 (LCNSQDRESLLWFSGNVSSSVSPLNWNPSIDCCSWEGI) form an N-cap region. The Extracellular segment spans residues 51-725 (LCNSQDRESL…ADTEDEEELK (675 aa)). A glycan (N-linked (GlcNAc...) asparagine) is linked at N66. LRR repeat units follow at residues 95–119 (DSHI…VLRL), 120–143 (HHLS…FLSA), 145–169 (DQLK…TFRN), 174–199 (CFPI…IFMQ), 201–225 (TFDL…MCKS), 226–250 (SPQL…LGRC), 252–274 (KLSV…IYNL), 275–298 (SELE…ITHL), 299–322 (TKLK…IGQL), 323–346 (SRLQ…LANC), 348–370 (NLVK…DFSR), 371–395 (FQSL…VHSC), 397–419 (SLSA…VLEL), 420–443 (ESLS…GILQ), 445–471 (CRNL…LISS), 474–498 (FPNL…LIKL), 499–521 (KSLA…WLGT), and 522–546 (FPHL…LFQL). 2 N-linked (GlcNAc...) asparagine glycosylation sites follow: N126 and N169. An N-linked (GlcNAc...) asparagine glycan is attached at N208. 2 N-linked (GlcNAc...) asparagine glycosylation sites follow: N262 and N273. N-linked (GlcNAc...) asparagine glycosylation is found at N334 and N345. A glycan (N-linked (GlcNAc...) asparagine) is linked at N381. 3 N-linked (GlcNAc...) asparagine glycosylation sites follow: N434, N447, and N459. Residues 548–569 (ALMSQKAYDATERNYLKLPVFV) form an LRR 19; degenerate repeat. 4 LRR repeats span residues 570–593 (SPNN…IYIR), 608–631 (LKVL…ELSK), 632–656 (LTSL…LTSL), and 658–681 (YMSY…QFDT). N-linked (GlcNAc...) asparagine glycosylation is present at N573. The N-linked (GlcNAc...) asparagine glycan is linked to N666. The tract at residues 699-725 (LTSCKASTKLPATTTNKADTEDEEELK) is C-cap/acidic domain. The helical transmembrane segment at 726 to 746 (FIFILGVATGFFVSYCFYWCF) threads the bilayer. Residues 747–756 (FARLDAFISK) are Cytoplasmic-facing.

The protein belongs to the RLP family. In terms of tissue distribution, expressed at very low levels in the shoot apex.

The protein localises to the cell membrane. Involved in the perception of CLV3 and CLV3-like peptides, that act as extracellular signals regulating meristems maintenance. Contributes, with WAKL22/RFO1, to resistance to F.oxysporum (f.) matthioli in cv. Columbia relative to cv. Ty-0. The chain is Receptor-like protein 3 from Arabidopsis thaliana (Mouse-ear cress).